The sequence spans 283 residues: Elongation factor Ts (283 aa).

Positions 84 to 87 are involved in Mg(2+) ion dislocation from EF-Tu; sequence TDFV.

Belongs to the EF-Ts family.

It localises to the cytoplasm. In terms of biological role, associates with the EF-Tu.GDP complex and induces the exchange of GDP to GTP. It remains bound to the aminoacyl-tRNA.EF-Tu.GTP complex up to the GTP hydrolysis stage on the ribosome. The sequence is that of Elongation factor Ts from Bifidobacterium longum subsp. infantis (strain ATCC 15697 / DSM 20088 / JCM 1222 / NCTC 11817 / S12).